The following is a 350-amino-acid chain: Phosphoribosylformylglycinamidine cyclo-ligase (350 aa).

The protein belongs to the AIR synthase family.

The protein localises to the cytoplasm. It carries out the reaction 2-formamido-N(1)-(5-O-phospho-beta-D-ribosyl)acetamidine + ATP = 5-amino-1-(5-phospho-beta-D-ribosyl)imidazole + ADP + phosphate + H(+). It functions in the pathway purine metabolism; IMP biosynthesis via de novo pathway; 5-amino-1-(5-phospho-D-ribosyl)imidazole from N(2)-formyl-N(1)-(5-phospho-D-ribosyl)glycinamide: step 2/2. In Syntrophotalea carbinolica (strain DSM 2380 / NBRC 103641 / GraBd1) (Pelobacter carbinolicus), this protein is Phosphoribosylformylglycinamidine cyclo-ligase.